We begin with the raw amino-acid sequence, 404 residues long: Argininosuccinate synthase (404 aa).

Residues Ala-11–Ser-19 and Ala-38 contribute to the ATP site. The L-citrulline site is built by Tyr-91 and Ser-96. ATP is bound at residue Gly-121. Thr-123, Asn-127, and Asp-128 together coordinate L-aspartate. Asn-127 is an L-citrulline binding site. The L-citrulline site is built by Arg-131, Ser-182, Ser-191, Glu-267, and Tyr-279.

Belongs to the argininosuccinate synthase family. Type 1 subfamily. Homotetramer.

It localises to the cytoplasm. It catalyses the reaction L-citrulline + L-aspartate + ATP = 2-(N(omega)-L-arginino)succinate + AMP + diphosphate + H(+). It functions in the pathway amino-acid biosynthesis; L-arginine biosynthesis; L-arginine from L-ornithine and carbamoyl phosphate: step 2/3. This Paramagnetospirillum magneticum (strain ATCC 700264 / AMB-1) (Magnetospirillum magneticum) protein is Argininosuccinate synthase.